Here is an 85-residue protein sequence, read N- to C-terminus: UPF0386 protein RHE_CH01859 (85 aa).

Belongs to the UPF0386 family.

The protein is UPF0386 protein RHE_CH01859 of Rhizobium etli (strain ATCC 51251 / DSM 11541 / JCM 21823 / NBRC 15573 / CFN 42).